Consider the following 1248-residue polypeptide: ABC transporter B family member 7 (1248 aa).

The next 6 membrane-spanning stretches (helical) occupy residues 32–52 (IVLM…QPFM), 82–102 (FLYL…CWMV), 158–175 (FTQL…AFIV), 179–201 (LTLA…TYIM), 261–281 (GLGI…AIWY), and 299–321 (VITS…NSFA). Residues 35–322 (MVIGTLSAMA…TLPSLNSFAA (288 aa)) form the ABC transmembrane type-1 1 domain. Residues 357–593 (IELRDVYFRY…PEGTYSQLVR (237 aa)) form the ABC transporter 1 domain. 392–399 (GQSGSGKS) serves as a coordination point for ATP. N-linked (GlcNAc...) asparagine glycosylation is found at Asn-473 and Asn-652. Residues 682–702 (VLLLGSLAAVIHGIVFPVQGL) traverse the membrane as a helical segment. Residues 683–970 (LLLGSLAAVI…TSTMAPDINK (288 aa)) form the ABC transmembrane type-1 2 domain. Asn-720 carries N-linked (GlcNAc...) asparagine glycosylation. The chain crosses the membrane as a helical span at residues 722–742 (SLFWALIFVALGLTDLIVIPL). N-linked (GlcNAc...) asparagine glycosylation occurs at Asn-779. Transmembrane regions (helical) follow at residues 813–833 (IIGA…MALL), 834–854 (VAPV…GFGA), 914–934 (GSYL…SWLI), and 939–959 (ATFG…VGVT). The region spanning 1005-1242 (IELQHVSFRY…SGGAYASLVA (238 aa)) is the ABC transporter 2 domain. Residue 1040–1047 (GESGSGKS) participates in ATP binding. 3 N-linked (GlcNAc...) asparagine glycosylation sites follow: Asn-1094, Asn-1193, and Asn-1244.

Belongs to the ABC transporter superfamily. ABCB family. Multidrug resistance exporter (TC 3.A.1.201) subfamily.

It is found in the membrane. The protein is ABC transporter B family member 7 (ABCB7) of Arabidopsis thaliana (Mouse-ear cress).